A 230-amino-acid polypeptide reads, in one-letter code: 2,3-bisphosphoglycerate-dependent phosphoglycerate mutase (230 aa).

Substrate contacts are provided by residues 8–15, 21–22, Arg60, 87–90, Lys98, 114–115, and 183–184; these read RHGESEWN, TG, ERHY, RR, and GN. His9 functions as the Tele-phosphohistidine intermediate in the catalytic mechanism. Glu87 functions as the Proton donor/acceptor in the catalytic mechanism.

This sequence belongs to the phosphoglycerate mutase family. BPG-dependent PGAM subfamily.

The enzyme catalyses (2R)-2-phosphoglycerate = (2R)-3-phosphoglycerate. It participates in carbohydrate degradation; glycolysis; pyruvate from D-glyceraldehyde 3-phosphate: step 3/5. Its function is as follows. Catalyzes the interconversion of 2-phosphoglycerate and 3-phosphoglycerate. The chain is 2,3-bisphosphoglycerate-dependent phosphoglycerate mutase from Streptococcus sanguinis (strain SK36).